A 711-amino-acid polypeptide reads, in one-letter code: Long-chain-fatty-acid--CoA ligase 4 (711 aa).

The helical; Signal-anchor for type III membrane protein transmembrane segment at 8 to 28 (LTIILLPVHLLITIYSALIFI) threads the bilayer. The Cytoplasmic segment spans residues 29–711 (PWYFLTNAKK…KDIERMYGGK (683 aa)). A Phosphoserine modification is found at Ser-447.

This sequence belongs to the ATP-dependent AMP-binding enzyme family. Mg(2+) is required as a cofactor.

The protein localises to the mitochondrion outer membrane. Its subcellular location is the peroxisome membrane. It is found in the microsome membrane. The protein resides in the endoplasmic reticulum membrane. It localises to the cell membrane. The catalysed reaction is a long-chain fatty acid + ATP + CoA = a long-chain fatty acyl-CoA + AMP + diphosphate. It catalyses the reaction (5Z,8Z,11Z,14Z)-eicosatetraenoate + ATP + CoA = (5Z,8Z,11Z,14Z)-eicosatetraenoyl-CoA + AMP + diphosphate. The enzyme catalyses hexadecanoate + ATP + CoA = hexadecanoyl-CoA + AMP + diphosphate. It carries out the reaction (E)-hexadec-2-enoate + ATP + CoA = (2E)-hexadecenoyl-CoA + AMP + diphosphate. The catalysed reaction is 15-hydroxy-(5Z,8Z,11Z,13E)-eicosatetraenoate + ATP + CoA = 15-hydroxy-(5Z,8Z,11Z,13E)-eicosatetraenoyl-CoA + AMP + diphosphate. It catalyses the reaction 12-hydroxy-(5Z,8Z,10E,14Z)-eicosatetraenoate + ATP + CoA = 12-hydroxy-(5Z,8Z,10E,14Z)-eicosatetraenoyl-CoA + AMP + diphosphate. The enzyme catalyses 5-hydroxy-(6E,8Z,11Z,14Z)-eicosatetraenoate + ATP + CoA = 5-hydroxy-(6E,8Z,11Z,14Z)-eicosatetraenoyl-CoA + AMP + diphosphate. It carries out the reaction 5,6-epoxy-(8Z,11Z,14Z)-eicosatrienoate + ATP + CoA = 5,6-epoxy-(8Z,11Z,14Z)-eicosatrienoyl-CoA + AMP + diphosphate. The catalysed reaction is 14,15-epoxy-(5Z,8Z,11Z)-eicosatrienoate + ATP + CoA = 14,15-epoxy-(5Z,8Z,11Z)-eicosatrienoyl-CoA + AMP + diphosphate. It catalyses the reaction 11,12-epoxy-(5Z,8Z,14Z)-eicosatrienoate + ATP + CoA = 11,12-epoxy-(5Z,8Z,14Z)-eicosatrienoyl-CoA + AMP + diphosphate. The enzyme catalyses 8,9-epoxy-(5Z,11Z,14Z)-eicosatrienoate + ATP + CoA = 8,9-epoxy-(5Z,11Z,14Z)-eicosatrienoyl-CoA + AMP + diphosphate. Its activity is regulated as follows. Both triacsin C and rosiglitazone inhibit arachidonoyl-CoA ligase activity. In terms of biological role, catalyzes the conversion of long-chain fatty acids to their active form acyl-CoA for both synthesis of cellular lipids, and degradation via beta-oxidation. Preferentially activates arachidonate and eicosapentaenoate as substrates. Preferentially activates 8,9-EET &gt; 14,15-EET &gt; 5,6-EET &gt; 11,12-EET. Modulates glucose-stimulated insulin secretion by regulating the levels of unesterified EETs. Modulates prostaglandin E2 secretion. In Homo sapiens (Human), this protein is Long-chain-fatty-acid--CoA ligase 4 (ACSL4).